Here is a 373-residue protein sequence, read N- to C-terminus: Queuine tRNA-ribosyltransferase (373 aa).

Asp-94 functions as the Proton acceptor in the catalytic mechanism. Substrate-binding positions include 94-98, Asp-148, Gln-191, and Gly-218; that span reads DSGGF. Positions 249 to 255 are RNA binding; sequence GVGTPDY. Catalysis depends on Asp-268, which acts as the Nucleophile. The segment at 273–277 is RNA binding; important for wobble base 34 recognition; sequence TRIGR. 4 residues coordinate Zn(2+): Cys-306, Cys-308, Cys-311, and His-337.

This sequence belongs to the queuine tRNA-ribosyltransferase family. In terms of assembly, homodimer. Within each dimer, one monomer is responsible for RNA recognition and catalysis, while the other monomer binds to the replacement base PreQ1. Zn(2+) is required as a cofactor.

The enzyme catalyses 7-aminomethyl-7-carbaguanine + guanosine(34) in tRNA = 7-aminomethyl-7-carbaguanosine(34) in tRNA + guanine. It functions in the pathway tRNA modification; tRNA-queuosine biosynthesis. Catalyzes the base-exchange of a guanine (G) residue with the queuine precursor 7-aminomethyl-7-deazaguanine (PreQ1) at position 34 (anticodon wobble position) in tRNAs with GU(N) anticodons (tRNA-Asp, -Asn, -His and -Tyr). Catalysis occurs through a double-displacement mechanism. The nucleophile active site attacks the C1' of nucleotide 34 to detach the guanine base from the RNA, forming a covalent enzyme-RNA intermediate. The proton acceptor active site deprotonates the incoming PreQ1, allowing a nucleophilic attack on the C1' of the ribose to form the product. After dissociation, two additional enzymatic reactions on the tRNA convert PreQ1 to queuine (Q), resulting in the hypermodified nucleoside queuosine (7-(((4,5-cis-dihydroxy-2-cyclopenten-1-yl)amino)methyl)-7-deazaguanosine). This is Queuine tRNA-ribosyltransferase from Ruminiclostridium cellulolyticum (strain ATCC 35319 / DSM 5812 / JCM 6584 / H10) (Clostridium cellulolyticum).